Here is a 61-residue protein sequence, read N- to C-terminus: IKCHNTLLPFIYKTCPEGQNLCFKGTLKFPKKTTYNRGCAATCPKSSLLVKYVCCNTNKCN.

Disulfide bonds link Cys-3-Cys-22, Cys-15-Cys-39, Cys-43-Cys-54, and Cys-55-Cys-60.

Belongs to the three-finger toxin family. Short-chain subfamily. Orphan group XV sub-subfamily. Expressed by the venom gland.

The protein resides in the secreted. Its subcellular location is the target cell membrane. In terms of biological role, has low cytotoxic activity. This Naja melanoleuca (Forest cobra) protein is Cytotoxin homolog 2.